Reading from the N-terminus, the 614-residue chain is Putative ABC transporter ATP-binding protein MA_1747 (614 aa).

ABC transporter domains are found at residues 11-251 and 319-552; these read VRLE…KLGI and VLIE…AGLL. ATP is bound by residues 45 to 52 and 352 to 359; these read GPSGCGKS and GHNGAGKT.

Belongs to the ABC transporter superfamily.

The protein localises to the cell membrane. In terms of biological role, probably part of an ABC transporter complex. Responsible for energy coupling to the transport system. The sequence is that of Putative ABC transporter ATP-binding protein MA_1747 from Methanosarcina acetivorans (strain ATCC 35395 / DSM 2834 / JCM 12185 / C2A).